The chain runs to 832 residues: Subtilisin-like protease SBT2.4 (832 aa).

The N-terminal stretch at Met-1–Ala-27 is a signal peptide. Residues Glu-74 to Met-138 form the Inhibitor I9 domain. Residues Gln-150–Leu-690 form the Peptidase S8 domain. Residue Asp-174 is the Charge relay system of the active site. 2 N-linked (GlcNAc...) asparagine glycosylation sites follow: Asn-196 and Asn-238. Catalysis depends on His-252, which acts as the Charge relay system. The PA domain occupies Thr-425–Tyr-524. An N-linked (GlcNAc...) asparagine glycan is attached at Asn-426. Catalysis depends on Ser-618, which acts as the Charge relay system. Asn-761, Asn-774, and Asn-800 each carry an N-linked (GlcNAc...) asparagine glycan.

It belongs to the peptidase S8 family.

The protein resides in the secreted. Serine protease required for epidermal surface formation in embryos and juvenile plants. Involved in embryonic cuticle formation downstream of BHLH95/ZOU. The sequence is that of Subtilisin-like protease SBT2.4 from Arabidopsis thaliana (Mouse-ear cress).